A 473-amino-acid chain; its full sequence is H(+)/Cl(-) exchange transporter ClcA (473 aa).

Topologically, residues 1–32 are cytoplasmic; that stretch reads MKTDTPSLEIPQAARLRRRQLIRQLLERDKTP. The helical transmembrane segment at 33–69 threads the bilayer; the sequence is LAILFMAAVVGTLVGLAAVAFDKGVSWLQNQRMGALV. Residues 70–76 lie on the Periplasmic side of the membrane; sequence HTADNYP. A helical transmembrane segment spans residues 77 to 100; sequence LLLTVAFLCSAVLAMFGYFLVRKY. The Selectivity filter part_1 motif lies at 106 to 110; the sequence is GSGIP. Serine 107 lines the chloride pocket. Residues 109-116 constitute an intramembrane region (helical); sequence IPEIEGAL. Residues 117-123 lie on the Cytoplasmic side of the membrane; the sequence is EDQRPVR. Transmembrane regions (helical) follow at residues 124-141 and 148-166; these read WWRV…TLGG and EGPT…LDIF. The Selectivity filter part_2 signature appears at 146-150; that stretch reads GREGP. At 167 to 176 the chain is on the cytoplasmic side; the sequence is RLKGDEARHT. Intramembrane regions (helical) lie at residues 177 to 189 and 193 to 201; these read LLAT…LAAA and PLAGILFII. Topologically, residues 202–214 are cytoplasmic; sequence EEMRPQFRYTLIS. Residues 215–232 form a helical membrane-spanning segment; it reads IKAVFIGVIMSTIMYRIF. At 233–252 the chain is on the periplasmic side; the sequence is NHEVALIDVGKLSDAPLNTL. The chain crosses the membrane as a helical span at residues 253-281; that stretch reads WLYLILGIIFGIFGPIFNKWVLGMQDLLH. The Cytoplasmic portion of the chain corresponds to 282 to 287; it reads RVHGGN. Residues 288–309 form a helical membrane-spanning segment; sequence ITKWVIMGGAIGGLCGLLGFVA. Residues 310 to 329 are Periplasmic-facing; it reads PATSGGGFNLIPIATAGNFS. The next 2 membrane-spanning stretches (helical) occupy residues 330–349 and 355–376; these read MGML…LCFS and GIFA…MVAV. The Selectivity filter part_3 motif lies at 355 to 359; it reads GIFAP. Chloride contacts are provided by isoleucine 356 and phenylalanine 357. At 377-386 the chain is on the periplasmic side; it reads ELFPQYHLEA. The segment at residues 387–401 is an intramembrane region (helical); it reads GTFAIAGMGALLAAS. The segment at residues 402–404 is an intramembrane region (note=Loop between two helices); it reads IRA. The helical intramembrane region spans 405–416; that stretch reads PLTGIILVLEMT. Residues 417–421 constitute an intramembrane region (note=Loop between two helices); that stretch reads DNYQL. Residues 422–438 traverse the membrane as a helical segment; sequence ILPMIITGLGATLLAQF. Topologically, residues 439–473 are cytoplasmic; it reads TGGKPLYSAILARTLAKQEAEQLARSKAASASENT. Chloride is bound at residue tyrosine 445.

The protein belongs to the chloride channel (TC 2.A.49) family. ClcA subfamily. In terms of assembly, homodimer.

Its subcellular location is the cell inner membrane. The enzyme catalyses 2 chloride(in) + H(+)(out) = 2 chloride(out) + H(+)(in). Its function is as follows. Proton-coupled chloride transporter. Functions as antiport system and exchanges two chloride ions for 1 proton. Probably acts as an electrical shunt for an outwardly-directed proton pump that is linked to amino acid decarboxylation, as part of the extreme acid resistance (XAR) response. This chain is H(+)/Cl(-) exchange transporter ClcA, found in Escherichia fergusonii (strain ATCC 35469 / DSM 13698 / CCUG 18766 / IAM 14443 / JCM 21226 / LMG 7866 / NBRC 102419 / NCTC 12128 / CDC 0568-73).